The following is a 533-amino-acid chain: Dipeptidase (533 aa).

C3 is a catalytic residue.

It belongs to the peptidase C69 family.

The catalysed reaction is an L-aminoacyl-L-amino acid + H2O = 2 an L-alpha-amino acid. Hydrolyzes a wide range of dipeptides. Highest activity against Ala-Gln. In Bifidobacterium longum (strain NCC 2705), this protein is Dipeptidase.